Here is a 1194-residue protein sequence, read N- to C-terminus: IQ motif and SEC7 domain-containing protein 3 (1194 aa).

Residues A20 to H56 adopt a coiled-coil conformation. Disordered stretches follow at residues A62–R149 and G229–A272. Residues Q63–A78 show a composition bias toward pro residues. Residues P79 to P92 show a composition bias toward low complexity. Residues P122 to H133 are compositionally biased toward polar residues. A Phosphoserine modification is found at S255. The region spanning S311–E340 is the IQ domain. 2 disordered regions span residues S439–S471 and P515–K610. Low complexity-rich tracts occupy residues V561 to T572 and S600 to K610. In terms of domain architecture, SEC7 spans T646–K839. The region spanning T852 to E985 is the PH domain. Disordered regions lie at residues K1002–P1099 and S1137–C1175. The segment covering A1024–T1035 has biased composition (basic and acidic residues). A compositionally biased stretch (polar residues) spans E1036 to H1052. 2 stretches are compositionally biased toward pro residues: residues A1064 to P1099 and P1159 to N1169.

This sequence belongs to the BRAG family. Interacts with DLG1 and DLG4. Interacts with GPHN. As to expression, expressed in brain. Localized to dendrites, as well as somas of neuronal cells.

It localises to the cytoplasm. Its subcellular location is the postsynaptic density. Functionally, acts as a guanine nucleotide exchange factor (GEF) for ARF1. This Rattus norvegicus (Rat) protein is IQ motif and SEC7 domain-containing protein 3 (Iqsec3).